Reading from the N-terminus, the 252-residue chain is 3-dehydroquinate dehydratase (252 aa).

3-dehydroquinate-binding positions include serine 21, 46–48 (EWR), and arginine 82. Catalysis depends on histidine 143, which acts as the Proton donor/acceptor. The active-site Schiff-base intermediate with substrate is lysine 170. Residues arginine 213, serine 232, and glutamine 236 each contribute to the 3-dehydroquinate site.

It belongs to the type-I 3-dehydroquinase family. Homodimer.

It catalyses the reaction 3-dehydroquinate = 3-dehydroshikimate + H2O. It participates in metabolic intermediate biosynthesis; chorismate biosynthesis; chorismate from D-erythrose 4-phosphate and phosphoenolpyruvate: step 3/7. Its function is as follows. Involved in the third step of the chorismate pathway, which leads to the biosynthesis of aromatic amino acids. Catalyzes the cis-dehydration of 3-dehydroquinate (DHQ) and introduces the first double bond of the aromatic ring to yield 3-dehydroshikimate. This Shigella dysenteriae protein is 3-dehydroquinate dehydratase.